A 1690-amino-acid polypeptide reads, in one-letter code: rRNA biogenesis protein rrp5 (1690 aa).

Disordered regions lie at residues 1–42 (MAGN…GASS) and 59–90 (FMESASGTAELSKKTRPKKKGSKKSSKSELDN). Residues 11-32 (ASEGSDSQGNERISSLSANEAT) show a composition bias toward polar residues. The span at 72–83 (KTRPKKKGSKKS) shows a compositional bias: basic residues. S1 motif domains are found at residues 109 to 209 (GSLI…LSLK), 226 to 289 (GSMI…LTAT), 306 to 376 (GDYI…VSFL), 398 to 473 (GFIV…LSFQ), 490 to 559 (GQFV…LTLK), 579 to 648 (GTQT…VGCR), 666 to 739 (GSVL…LSLK), 761 to 830 (GIKY…MSFK), 866 to 942 (GKIT…ISHR), 973 to 1044 (GDEV…IGPL), 1053 to 1122 (GSRL…LSAR), 1147 to 1216 (GDIC…MSLK), and 1236 to 1307 (GSNL…LGLK). The segment at 1313–1424 (SDSDISMSDN…EEKDLDEIPS (112 aa)) is disordered. Acidic residues-rich tracts occupy residues 1348–1367 (QSEEVENLESAGDEDEEEEP), 1390–1400 (DTEDSEDEEDE), and 1412–1421 (FDDEEKDLDE). Thr-1391 is modified (phosphothreonine). Phosphoserine is present on Ser-1394. 3 HAT repeats span residues 1420 to 1452 (DEIPSTAADFERQLLSSPNSSLLWISYMAYHLN), 1526 to 1558 (GKVDLADEYMQLMLKNFKQVPSVWIQYATFLLN), and 1596 to 1628 (GDPERGRTIFEGLLSSYPKRLDLWNVLIDMEMK). Ser-1684 and Ser-1686 each carry phosphoserine.

Component of the ribosomal small subunit (SSU) processome.

It localises to the nucleus. The protein resides in the nucleolus. Its function is as follows. Involved in the biogenesis of rRNA. Required for the formation of 18S and 5.8S rRNA. This is rRNA biogenesis protein rrp5 from Schizosaccharomyces pombe (strain 972 / ATCC 24843) (Fission yeast).